The chain runs to 248 residues: 2,3-bisphosphoglycerate-dependent phosphoglycerate mutase (248 aa).

Residues 8–15 (RHGESTWN), 21–22 (TG), Arg60, 87–90 (ERHY), Lys98, 114–115 (RR), and 183–184 (GN) each bind substrate. His9 functions as the Tele-phosphohistidine intermediate in the catalytic mechanism. The active-site Proton donor/acceptor is Glu87.

This sequence belongs to the phosphoglycerate mutase family. BPG-dependent PGAM subfamily. Homodimer.

The enzyme catalyses (2R)-2-phosphoglycerate = (2R)-3-phosphoglycerate. Its pathway is carbohydrate degradation; glycolysis; pyruvate from D-glyceraldehyde 3-phosphate: step 3/5. In terms of biological role, catalyzes the interconversion of 2-phosphoglycerate and 3-phosphoglycerate. In Burkholderia ambifaria (strain ATCC BAA-244 / DSM 16087 / CCUG 44356 / LMG 19182 / AMMD) (Burkholderia cepacia (strain AMMD)), this protein is 2,3-bisphosphoglycerate-dependent phosphoglycerate mutase.